A 193-amino-acid polypeptide reads, in one-letter code: Adenylate kinase (193 aa).

Glycine 11–threonine 16 contacts ATP. The segment at serine 31–valine 60 is NMP. Residues threonine 32, arginine 37, aspartate 58 to valine 60, glycine 86 to arginine 89, and glutamine 93 contribute to the AMP site. The tract at residues glycine 127–aspartate 137 is LID. Arginine 128 is an ATP binding site. Positions 134 and 145 each coordinate AMP. An ATP-binding site is contributed by glycine 173.

This sequence belongs to the adenylate kinase family. Monomer.

It localises to the cytoplasm. The catalysed reaction is AMP + ATP = 2 ADP. Its pathway is purine metabolism; AMP biosynthesis via salvage pathway; AMP from ADP: step 1/1. Its function is as follows. Catalyzes the reversible transfer of the terminal phosphate group between ATP and AMP. Plays an important role in cellular energy homeostasis and in adenine nucleotide metabolism. The protein is Adenylate kinase of Renibacterium salmoninarum (strain ATCC 33209 / DSM 20767 / JCM 11484 / NBRC 15589 / NCIMB 2235).